We begin with the raw amino-acid sequence, 71 residues long: UPF0346 protein Bcer98_1690 (71 aa).

It belongs to the UPF0346 family.

The sequence is that of UPF0346 protein Bcer98_1690 from Bacillus cytotoxicus (strain DSM 22905 / CIP 110041 / 391-98 / NVH 391-98).